The sequence spans 291 residues: Methionine aminopeptidase (291 aa).

Residue His-118 participates in substrate binding. Asp-135, Asp-146, and His-209 together coordinate a divalent metal cation. His-216 serves as a coordination point for substrate. A divalent metal cation contacts are provided by Glu-241 and Glu-273.

Belongs to the peptidase M24A family. Methionine aminopeptidase type 1 subfamily. As to quaternary structure, monomer. Requires Co(2+) as cofactor. The cofactor is Zn(2+). Mn(2+) is required as a cofactor. Fe(2+) serves as cofactor.

It catalyses the reaction Release of N-terminal amino acids, preferentially methionine, from peptides and arylamides.. Removes the N-terminal methionine from nascent proteins. The N-terminal methionine is often cleaved when the second residue in the primary sequence is small and uncharged (Met-Ala-, Cys, Gly, Pro, Ser, Thr, or Val). Requires deformylation of the N(alpha)-formylated initiator methionine before it can be hydrolyzed. The sequence is that of Methionine aminopeptidase from Chlamydia trachomatis serovar D (strain ATCC VR-885 / DSM 19411 / UW-3/Cx).